The chain runs to 333 residues: Serine/threonine-protein phosphatase 4 catalytic subunit 1 (333 aa).

The disordered stretch occupies residues 1–28 (MALACTDSANSTFSRVDSPTSGPSDQLT). Polar residues predominate over residues 7–27 (DSANSTFSRVDSPTSGPSDQL). Residues Asp79, His81, Asp107, and Asn139 each contribute to the Mn(2+) site. His140 serves as the catalytic Proton donor. Mn(2+) is bound by residues His189 and His264. Leu333 carries the leucine methyl ester modification.

It belongs to the PPP phosphatase family. PP-4 (PP-X) subfamily. As to quaternary structure, serine/threonine-protein phosphatase 4 (PP4) occurs in different assemblies of the catalytic and one or more regulatory subunits. The regulatory subunits are likely to be ppfr-1, ppfr-2, ppfr-4 and smk-1. Interacts with mei-1. Mn(2+) serves as cofactor. In terms of processing, methylation at the C-terminal Leu-333 is critical for interactions with regulatory subunits.

It is found in the cytoplasm. It localises to the cytoskeleton. The protein resides in the microtubule organizing center. Its subcellular location is the centrosome. It carries out the reaction O-phospho-L-seryl-[protein] + H2O = L-seryl-[protein] + phosphate. The catalysed reaction is O-phospho-L-threonyl-[protein] + H2O = L-threonyl-[protein] + phosphate. Functionally, protein phosphatase which plays an essential role in meiosis and in early embryonic mitosis. During spermatocyte meiosis and the first embryonic mitosis, regulates centrosome maturation, and thus spindle formation, by recruiting some of the components of the pericentriolar material (PCM). During oocyte meiosis I, regulates meiotic chromosome dynamics including synapsis-independent chromosome pairing, restriction of synapsis to homologous chromosomes, programmed DNA double-strand break initiation and crossover formation resulting in chiasma formation. During oocyte meiosis II and probably together with regulatory subunit ppfr-1, may regulate microtubule severing by dephosphorylating and activating mei-1, a component of the katanin microtubule severing complex. The sequence is that of Serine/threonine-protein phosphatase 4 catalytic subunit 1 from Caenorhabditis elegans.